The chain runs to 240 residues: Adenylate dimethylallyltransferase (240 aa).

This sequence belongs to the isopentenyl transferase family.

The enzyme catalyses dimethylallyl diphosphate + AMP = N(6)-(dimethylallyl)adenosine 5'-phosphate + diphosphate. Transfers dimethylallyl groups to AMP as part of the biosynthesis of cytokinin phytohormones. The chain is Adenylate dimethylallyltransferase (ipt) from Agrobacterium vitis (Rhizobium vitis).